The primary structure comprises 364 residues: Putative galactoside 2-alpha-L-fucosyltransferase svh-11 (364 aa).

Topologically, residues 1–19 are cytoplasmic; sequence MRLFHFLKFLTINNFSRYC. Residues 20–42 traverse the membrane as a helical; Signal-anchor for type II membrane protein segment; sequence LKIVKVHIIWITIICIIYFNWRF. At 43–364 the chain is on the lumenal side; that stretch reads KKLDFMAIPY…SANSFTVVRS (322 aa). N60 and N128 each carry an N-linked (GlcNAc...) asparagine glycan.

It belongs to the glycosyltransferase 11 family.

The protein resides in the golgi apparatus. Its subcellular location is the golgi stack membrane. Mediates the transfer of fucose to the terminal galactose on glycan chains of cell surface glycoproteins and glycolipids. Required for axon regeneration after injury. The sequence is that of Putative galactoside 2-alpha-L-fucosyltransferase svh-11 from Caenorhabditis elegans.